Here is a 1483-residue protein sequence, read N- to C-terminus: MAPLLGRKPFPLVKPLPGEEPLFTIPHTQEAFRTREEYEARLERYSERIWTCKSTGSSQLTHKEAWEEEQEVAELLKEEFPAWYEKLVLEMVHHNTASLEKLVDTAWLEIMTKYAVGEECDFEVGKEKMLKVKIVKIHPLEKVDEEATEKKSDGACDSPSSDKENSSQIAQDHQKKETVVKEDEGRRESINDRARRSPRKLPTSLKKGERKWAPPKFLPHKYDVKLQNEDKIISNVPADSLIRTERPPNKEIVRYFIRHNALRAGTGENAPWVVEDELVKKYSLPSKFSDFLLDPYKYMTLNPSTKRKNTGSPDRKPSKKSKTDNSSLSSPLNPKLWCHVHLKKSLSGSPLKVKNSKNSKSPEEHLEEMMKMMSPNKLHTNFHIPKKGPPAKKPGKHSDKPLKAKGRSKGILNGQKSTGNSKSPKKGLKTPKTKMKQMTLLDMAKGTQKMTRAPRNSGGTPRTSSKPHKHLPPAALHLIAYYKENKDREDKRSALSCVISKTARLLSSEDRARLPEELRSLVQKRYELLEHKKRWASMSEEQRKEYLKKKREELKKKLKEKAKERREKEMLERLEKQKRYEDQELTGKNLPAFRLVDTPEGLPNTLFGDVAMVVEFLSCYSGLLLPDAQYPITAVSLMEALSADKGGFLYLNRVLVILLQTLLQDEIAEDYGELGMKLSEIPLTLHSVSELVRLCLRRSDVQEESEGSDTDDNKDSAAFEDNEVQDEFLEKLETSEFFELTSEEKLQILTALCHRILMTYSVQDHMETRQQMSAELWKERLAVLKEENDKKRAEKQKRKEMEAKNKENGKVENGLGKTDRKKEIVKFEPQVDTEAEDMISAVKSRRLLAIQAKKEREIQEREMKVKLERQAEEERIRKHKAAAEKAFQEGIAKAKLVMRRTPIGTDRNHNRYWLFSDEVPGLFIEKGWVHDSIDYRFNHHCKDHTVSGDEDYCPRSKKANLGKNASMNTQHGTATEVAVETTTPKQGQNLWFLCDSQKELDELLNCLHPQGIRESQLKERLEKRYQDIIHSIHLARKPNLGLKSCDGNQELLNFLRSDLIEVATRLQKGGLGYVEETSEFEARVISLEKLKDFGECVIALQASVIKKFLQGFMAPKQKRRKLQSEDSAKTEEVDEEKKMVEEAKVASALEKWKTAIREAQTFSRMHVLLGMLDACIKWDMSAENARCKVCRKKGEDDKLILCDECNKAFHLFCLRPALYEVPDGEWQCPACQPATARRNSRGRNYTEESASEDSEDDESDEEEEEEEEEEEEEDYEVAGLRLRPRKTIRGKHSVIPPAARSGRRPGKKPHSTRRSQPKAPPVDDAEVDELVLQTKRSSRRQSLELQKCEEILHKIVKYRFSWPFREPVTRDEAEDYYDVITHPMDFQTVQNKCSCGSYRSVQEFLTDMKQVFTNAEVYNCRGSHVLSCMVKTEQCLVALLHKHLPGHPYVRRKRKKFPDRLAEDEGDSEPEAVGQSRGRRQKK.

The WAC domain maps to 20–126 (EPLFTIPHTQ…GEECDFEVGK (107 aa)). The disordered stretch occupies residues 145-212 (EEATEKKSDG…TSLKKGERKW (68 aa)). Composition is skewed to basic and acidic residues over residues 148–165 (TEKKSDGACDSPSSDKEN) and 172–195 (DHQKKETVVKEDEGRRESINDRAR). A phosphoserine mark is found at serine 152, serine 158, and serine 161. A C motif motif is present at residues 207–213 (KGERKWA). Threonine 266 carries the phosphothreonine modification. The segment at 302–333 (NPSTKRKNTGSPDRKPSKKSKTDNSSLSSPLN) is disordered. 6 positions are modified to phosphoserine: serine 330, serine 345, serine 347, serine 349, serine 361, and serine 374. Disordered regions lie at residues 379 to 432 (HTNF…KTPK) and 446 to 470 (GTQKMTRAPRNSGGTPRTSSKPHKH). Composition is skewed to basic residues over residues 384–395 (IPKKGPPAKKPG) and 423–432 (SPKKGLKTPK). A coiled-coil region spans residues 533–586 (KRWASMSEEQRKEYLKKKREELKKKLKEKAKERREKEMLERLEKQKRYEDQELT). One can recognise a DDT domain in the interval 604–668 (NTLFGDVAMV…LQTLLQDEIA (65 aa)). A phosphoserine mark is found at serine 699, serine 705, serine 708, and serine 716. Residues 768-814 (TRQQMSAELWKERLAVLKEENDKKRAEKQKRKEMEAKNKENGKVENG) are a coiled coil. The span at 788-810 (NDKKRAEKQKRKEMEAKNKENGK) shows a compositional bias: basic and acidic residues. The disordered stretch occupies residues 788-817 (NDKKRAEKQKRKEMEAKNKENGKVENGLGK). A Glycyl lysine isopeptide (Lys-Gly) (interchain with G-Cter in SUMO1); alternate cross-link involves residue lysine 826. Lysine 826 participates in a covalent cross-link: Glycyl lysine isopeptide (Lys-Gly) (interchain with G-Cter in SUMO2); alternate. Residues 850–893 (IQAKKEREIQEREMKVKLERQAEEERIRKHKAAAEKAFQEGIAK) adopt a coiled-coil conformation. Residue lysine 853 forms a Glycyl lysine isopeptide (Lys-Gly) (interchain with G-Cter in SUMO2) linkage. Position 947 is a phosphoserine (serine 947). Glycyl lysine isopeptide (Lys-Gly) (interchain with G-Cter in SUMO2) cross-links involve residues lysine 1043, lysine 1089, and lysine 1107. Residues 1184 to 1234 (NARCKVCRKKGEDDKLILCDECNKAFHLFCLRPALYEVPDGEWQCPACQPA) form a PHD-type zinc finger. The tract at residues 1237 to 1326 (RRNSRGRNYT…PKAPPVDDAE (90 aa)) is disordered. The stretch at 1245-1283 (YTEESASEDSEDDESDEEEEEEEEEEEEEDYEVAGLRLR) forms a coiled coil. Residues 1249 to 1276 (SASEDSEDDESDEEEEEEEEEEEEEDYE) show a composition bias toward acidic residues. Composition is skewed to basic residues over residues 1282–1292 (LRPRKTIRGKH) and 1301–1316 (SGRRPGKKPHSTRRSQ). A Phosphoserine modification is found at serine 1315. The residue at position 1335 (lysine 1335) is an N6-acetyllysine. The Bromo domain maps to 1339–1443 (RRQSLELQKC…QCLVALLHKH (105 aa)). 2 positions are modified to phosphoserine: serine 1342 and serine 1468. A disordered region spans residues 1455 to 1483 (KKFPDRLAEDEGDSEPEAVGQSRGRRQKK).

It belongs to the WAL family. BAZ1B subfamily. In terms of assembly, component of the WICH-1 ISWI chromatin remodeling complex, at least composed of SMARCA1 and BAZ1B/WSTF, which regulates the spacing of histone octamers on the DNA template to facilitate access to DNA. Within the WICH-1 ISWI chromatin remodeling complex interacts with SMARCA1; the interaction is direct. Component of the WICH-5 ISWI chromatin remodeling complex (also called the WICH complex), at least composed of SMARCA5/SNF2H and BAZ1B/WSTF, which regulates the spacing of histone octamers on the DNA template to facilitate access to DNA. Within the WICH-5 ISWI chromatin remodeling complex interacts with SMARCA5/SNF2H; the interaction is direct. Component of the B-WICH chromatin remodeling complex, at least composed of SMARCA5/SNF2H, BAZ1B/WSTF, SF3B1, DEK, MYO1C, ERCC6, MYBBP1A and DDX21. Within the B-WICH chromatin remodeling complex, interacts with SMARCA5/SNF2H, DDX21, DEK, MYBBP1A, SF3B1, ERCC6 and MYO1C. Interacts with PCNA; the interaction is direct and is required for BAZ1B/WSTF binding to replication foci during S phase. Interacts with CDT1. Mn(2+) serves as cofactor. As to expression, ubiquitously expressed with high levels of expression in heart, brain, placenta, skeletal muscle and ovary.

The protein resides in the nucleus. It carries out the reaction L-tyrosyl-[protein] + ATP = O-phospho-L-tyrosyl-[protein] + ADP + H(+). Atypical tyrosine-protein kinase that plays a central role in chromatin remodeling and acts as a transcription regulator. Involved in DNA damage response by phosphorylating 'Tyr-142' of histone H2AX (H2AXY142ph). H2AXY142ph plays a central role in DNA repair and acts as a mark that distinguishes between apoptotic and repair responses to genotoxic stress. Regulatory subunit of the ATP-dependent WICH-1 and WICH-5 ISWI chromatin remodeling complexes, which form ordered nucleosome arrays on chromatin and facilitate access to DNA during DNA-templated processes such as DNA replication, transcription, and repair. Both complexes regulate the spacing of nucleosomes along the chromatin and have the ability to slide mononucleosomes to the center of a DNA template. The WICH-1 ISWI chromatin remodeling complex has a lower ATP hydrolysis rate than the WICH-5 ISWI chromatin remodeling complex. The WICH-5 ISWI chromatin-remodeling complex regulates the transcription of various genes, has a role in RNA polymerase I transcription. Within the B-WICH complex has a role in RNA polymerase III transcription. Mediates the recruitment of the WICH-5 ISWI chromatin remodeling complex to replication foci during DNA replication. The chain is Tyrosine-protein kinase BAZ1B (BAZ1B) from Homo sapiens (Human).